The primary structure comprises 128 residues: CD59 glycoprotein (128 aa).

The N-terminal stretch at methionine 1–serine 25 is a signal peptide. Residues leucine 26–serine 108 enclose the UPAR/Ly6 domain. 5 disulfide bridges follow: cysteine 28–cysteine 51, cysteine 31–cysteine 38, cysteine 44–cysteine 64, cysteine 70–cysteine 88, and cysteine 89–cysteine 94. An N-linked (GlcNAc...) asparagine glycan is attached at asparagine 43. Asparagine 102 carries the GPI-anchor amidated asparagine lipid modification. Positions glycine 103–proline 128 are cleaved as a propeptide — removed in mature form.

As to quaternary structure, interacts with T-cell surface antigen CD2. N- and O-glycosylated.

The protein resides in the cell membrane. The protein localises to the secreted. Its function is as follows. Potent inhibitor of the complement membrane attack complex (MAC) action, which protects self-cells from damage during complement activation. Acts by binding to the beta-haipins of C8 (C8A and C8B) components of the assembling MAC, forming an intermolecular beta-sheet that prevents incorporation of the multiple copies of C9 required for complete formation of the osmolytic pore. The chain is CD59 glycoprotein from Aotus trivirgatus (Three-striped night monkey).